The following is a 525-amino-acid chain: Beta-1,4-xylosyltransferase IRX14 (525 aa).

The Cytoplasmic segment spans residues 1 to 35 (MKLSALHQSYLNRRSNSFRSPTSLDSSVDGSGKSL). Residues 36-56 (IAVFWLILHCLCCLISLVLGF) form a helical; Signal-anchor for type II membrane protein membrane-spanning segment. The Lumenal portion of the chain corresponds to 57–525 (RFSRLVFFFL…SSSSKHQERN (469 aa)). Asn-102, Asn-204, and Asn-326 each carry an N-linked (GlcNAc...) asparagine glycan. The disordered stretch occupies residues 452–525 (RTPWPDVPPE…SSSSKHQERN (74 aa)). Polar residues predominate over residues 471–488 (PLSQGNTVVVIPKQQQHP). Over residues 489–503 (TKIRKPKRKSKKSKH) the composition is skewed to basic residues. The span at 508–519 (TDTTTQVYSSSS) shows a compositional bias: polar residues.

This sequence belongs to the glycosyltransferase 43 family. In terms of tissue distribution, expressed in developing interfascicular fibers and xylem cells in stems and developing secondary xylem in roots.

It localises to the golgi apparatus membrane. It carries out the reaction [(1-&gt;4)-beta-D-xylan](n) + UDP-alpha-D-xylose = [(1-&gt;4)-beta-D-xylan](n+1) + UDP + H(+). Its function is as follows. Involved in the synthesis of the hemicellulose glucuronoxylan, a major component of secondary cell walls. Involved in the elongation of glucuronoxylan xylosyl backbone. Xylan xylosyltransferase that acts cooperatively with IRX9 to achieve the successive addition of xylosyl residues during xylan backbone elongation. Required for the proper composition and structural properties of released seed coat mucilage. Required for the production of highly branched xylan polymers in seed coat mucilage. Xylan with xylose side chains seems to be necessary for pectin attachment to the seed surface. Together with MUCI70, required for xylan and pectin synthesis in seed coat epidermal (SCE) cells. In Arabidopsis thaliana (Mouse-ear cress), this protein is Beta-1,4-xylosyltransferase IRX14.